Reading from the N-terminus, the 367-residue chain is UDP-N-acetylglucosamine--N-acetylmuramyl-(pentapeptide) pyrophosphoryl-undecaprenol N-acetylglucosamine transferase (367 aa).

UDP-N-acetyl-alpha-D-glucosamine contacts are provided by residues 13–15, Asn125, Arg165, Ser192, and Gln293; that span reads TGG.

Belongs to the glycosyltransferase 28 family. MurG subfamily.

The protein resides in the cell inner membrane. The enzyme catalyses di-trans,octa-cis-undecaprenyl diphospho-N-acetyl-alpha-D-muramoyl-L-alanyl-D-glutamyl-meso-2,6-diaminopimeloyl-D-alanyl-D-alanine + UDP-N-acetyl-alpha-D-glucosamine = di-trans,octa-cis-undecaprenyl diphospho-[N-acetyl-alpha-D-glucosaminyl-(1-&gt;4)]-N-acetyl-alpha-D-muramoyl-L-alanyl-D-glutamyl-meso-2,6-diaminopimeloyl-D-alanyl-D-alanine + UDP + H(+). Its pathway is cell wall biogenesis; peptidoglycan biosynthesis. Cell wall formation. Catalyzes the transfer of a GlcNAc subunit on undecaprenyl-pyrophosphoryl-MurNAc-pentapeptide (lipid intermediate I) to form undecaprenyl-pyrophosphoryl-MurNAc-(pentapeptide)GlcNAc (lipid intermediate II). The sequence is that of UDP-N-acetylglucosamine--N-acetylmuramyl-(pentapeptide) pyrophosphoryl-undecaprenol N-acetylglucosamine transferase from Jannaschia sp. (strain CCS1).